The chain runs to 187 residues: UPF0301 protein YPTS_3341 (187 aa).

This sequence belongs to the UPF0301 (AlgH) family.

In Yersinia pseudotuberculosis serotype IB (strain PB1/+), this protein is UPF0301 protein YPTS_3341.